A 633-amino-acid polypeptide reads, in one-letter code: Chaperone protein dnaK2 (633 aa).

T197 carries the phosphothreonine; by autocatalysis modification. Over residues 513–532 (AEQNASSDKERREKIERKNQ) the composition is skewed to basic and acidic residues. 2 disordered regions span residues 513–534 (AEQNASSDKERREKIERKNQAD) and 598–633 (QQAGGGAAPGAAPQDGGTTSSDGGDDVIDADFTETK). The segment covering 606 to 619 (PGAAPQDGGTTSSD) has biased composition (low complexity). The segment covering 620–633 (GGDDVIDADFTETK) has biased composition (acidic residues).

The protein belongs to the heat shock protein 70 family.

In terms of biological role, acts as a chaperone. The polypeptide is Chaperone protein dnaK2 (dnaK2) (Nostoc sp. (strain PCC 7120 / SAG 25.82 / UTEX 2576)).